Consider the following 807-residue polypeptide: Leucine--tRNA ligase (807 aa).

Residues P40–H51 carry the 'HIGH' region motif. The 'KMSKS' region signature appears at K576–S580. K579 contacts ATP.

This sequence belongs to the class-I aminoacyl-tRNA synthetase family.

Its subcellular location is the cytoplasm. It carries out the reaction tRNA(Leu) + L-leucine + ATP = L-leucyl-tRNA(Leu) + AMP + diphosphate. The protein is Leucine--tRNA ligase of Chlorobaculum parvum (strain DSM 263 / NCIMB 8327) (Chlorobium vibrioforme subsp. thiosulfatophilum).